The sequence spans 240 residues: Gas vesicle protein C (240 aa).

The span at 1–13 (MALKDKWQQDRIG) shows a compositional bias: basic and acidic residues. Positions 1-20 (MALKDKWQQDRIGRQQGVQE) are disordered. 5 consecutive repeats follow at residues 18-50 (VQER…RQGF), 51-83 (VTGV…LENF), 84-116 (IQQL…LSEF), 117-149 (REDL…LAIF), and 150-207 (RQTL…LQDY). The tract at residues 18–207 (VQERQQQVQT…GVFRAELQDY (190 aa)) is 5 X 33 AA tandem repeats.

It belongs to the gas vesicle GvpC family.

Its subcellular location is the gas vesicle. Functionally, confers stability, involved in shaping gas vesicles, hollow, gas filled proteinaceous nanostructures. During planktonic growth they allow positioning of the organism at a favorable depth for light or nutrient acquisition. The protein is Gas vesicle protein C of Planktothrix agardhii (Oscillatoria agardhii).